Consider the following 94-residue polypeptide: Pyrimidine/purine nucleoside phosphorylase (94 aa).

It belongs to the nucleoside phosphorylase PpnP family.

It carries out the reaction a purine D-ribonucleoside + phosphate = a purine nucleobase + alpha-D-ribose 1-phosphate. The enzyme catalyses adenosine + phosphate = alpha-D-ribose 1-phosphate + adenine. The catalysed reaction is cytidine + phosphate = cytosine + alpha-D-ribose 1-phosphate. It catalyses the reaction guanosine + phosphate = alpha-D-ribose 1-phosphate + guanine. It carries out the reaction inosine + phosphate = alpha-D-ribose 1-phosphate + hypoxanthine. The enzyme catalyses thymidine + phosphate = 2-deoxy-alpha-D-ribose 1-phosphate + thymine. The catalysed reaction is uridine + phosphate = alpha-D-ribose 1-phosphate + uracil. It catalyses the reaction xanthosine + phosphate = alpha-D-ribose 1-phosphate + xanthine. In terms of biological role, catalyzes the phosphorolysis of diverse nucleosides, yielding D-ribose 1-phosphate and the respective free bases. Can use uridine, adenosine, guanosine, cytidine, thymidine, inosine and xanthosine as substrates. Also catalyzes the reverse reactions. This chain is Pyrimidine/purine nucleoside phosphorylase, found in Klebsiella pneumoniae (strain 342).